Here is a 359-residue protein sequence, read N- to C-terminus: MKAATAVIDRHALRHNLQQIRRLAPQSRLVAVVKANAYGHGLLAAAHTLQDADCYGVARISEALMLRAGGIVKPILLLEGFFDAEDLPVLVANHIETAVHSLEQLVALEAATLSAPINVWMKLDTGMHRLGVRPDQAEAFYQRLSACRNVIQPVNIMSHFSRADEPEVAATQQQLACFDAFAAGKPGKQSIAASGGILRWPQAHRDWVRPGIVLYGVSPFDAPYGRDFGLLPAMTLKSSLIAVREHKAGESVGYGGTWVSERDTRLGVIAIGYGDGYPRSAPSGTPVWLNGREVSIVGRVSMDMISIDLGPESTDKVGDEALMWGAELPVERVAACTGISAYELITNLTSRVAMEYLGE.

K34 functions as the Proton acceptor; specific for D-alanine in the catalytic mechanism. N6-(pyridoxal phosphate)lysine is present on K34. Residue R129 coordinates substrate. Y254 acts as the Proton acceptor; specific for L-alanine in catalysis. M302 is a binding site for substrate.

This sequence belongs to the alanine racemase family. Pyridoxal 5'-phosphate is required as a cofactor.

It carries out the reaction L-alanine = D-alanine. It participates in amino-acid biosynthesis; D-alanine biosynthesis; D-alanine from L-alanine: step 1/1. Functionally, catalyzes the interconversion of L-alanine and D-alanine. May also act on other amino acids. This Yersinia pestis protein is Alanine racemase (alr).